We begin with the raw amino-acid sequence, 111 residues long: Disintegrin CV-11-alpha (111 aa).

The first 20 residues, 1 to 20 (MIQVLLVIICLAVFPYQGSS), serve as a signal peptide directing secretion. A propeptide spanning residues 21–46 (IILESGNVNDFELVYPKKVTVLPTGA) is cleaved from the precursor. The Disintegrin domain maps to 47 to 111 (MNSAHPCCDP…SDCPRNPWKD (65 aa)). 4 disulfides stabilise this stretch: C53–C76, C67–C73, C72–C97, and C85–C104. The Cell attachment site motif lies at 89 to 91 (KGD).

It belongs to the disintegrin family. Dimeric disintegrin subfamily. In terms of assembly, heterodimer with subunit beta; disulfide-linked. In terms of tissue distribution, expressed by the venom gland.

It localises to the secreted. Its function is as follows. Inhibits ADP-induced human platelet aggregation. Antagonist of alpha-IIb/beta-3 (ITGA2B/ITGB3). The polypeptide is Disintegrin CV-11-alpha (Cerastes vipera (Sahara sand viper)).